The primary structure comprises 369 residues: Chorismate synthase (369 aa).

Arginine 48 and arginine 54 together coordinate NADP(+). Residues 125–127, 238–239, glycine 278, 293–297, and arginine 319 contribute to the FMN site; these read RSS, NA, and KPTSS.

This sequence belongs to the chorismate synthase family. As to quaternary structure, homotetramer. FMNH2 is required as a cofactor.

The enzyme catalyses 5-O-(1-carboxyvinyl)-3-phosphoshikimate = chorismate + phosphate. It functions in the pathway metabolic intermediate biosynthesis; chorismate biosynthesis; chorismate from D-erythrose 4-phosphate and phosphoenolpyruvate: step 7/7. In terms of biological role, catalyzes the anti-1,4-elimination of the C-3 phosphate and the C-6 proR hydrogen from 5-enolpyruvylshikimate-3-phosphate (EPSP) to yield chorismate, which is the branch point compound that serves as the starting substrate for the three terminal pathways of aromatic amino acid biosynthesis. This reaction introduces a second double bond into the aromatic ring system. This chain is Chorismate synthase, found in Burkholderia mallei (strain NCTC 10229).